The primary structure comprises 149 residues: uncharacterized protein (149 aa).

The 149-residue stretch at 1-149 folds into the N-acetyltransferase domain; it reads MNIRQAKTSD…VHYCLNVPAK (149 aa).

This sequence belongs to the acetyltransferase family.

This is an uncharacterized protein from Bacillus subtilis (strain 168).